A 688-amino-acid chain; its full sequence is Thyroid hormone-induced protein B (688 aa).

The N-terminal stretch at 1–20 (MMLSHWVLLLSLGAVWLAEG) is a signal peptide. MAM domains are found at residues 26–169 (GSCT…GYCI), 170–330 (ECDF…SCSG), 341–500 (AGCD…SCKI), and 509–669 (GKCT…PCND). 2 N-linked (GlcNAc...) asparagine glycosylation sites follow: Asn-32 and Asn-135. Residues Asn-358 and Asn-668 are each glycosylated (N-linked (GlcNAc...) asparagine).

It localises to the membrane. The protein resides in the secreted. The protein localises to the extracellular space. The protein is Thyroid hormone-induced protein B of Xenopus laevis (African clawed frog).